A 61-amino-acid polypeptide reads, in one-letter code: Small ribosomal subunit protein uS14 (61 aa).

Positions 24, 27, 40, and 43 each coordinate Zn(2+).

It belongs to the universal ribosomal protein uS14 family. Zinc-binding uS14 subfamily. In terms of assembly, part of the 30S ribosomal subunit. Contacts proteins S3 and S10. Zn(2+) is required as a cofactor.

In terms of biological role, binds 16S rRNA, required for the assembly of 30S particles and may also be responsible for determining the conformation of the 16S rRNA at the A site. This is Small ribosomal subunit protein uS14 from Desulfotalea psychrophila (strain LSv54 / DSM 12343).